The sequence spans 276 residues: Putative ankyrin repeat protein R838 (276 aa).

4 ANK repeats span residues 134–163 (DGDN…DPRS), 164–193 (DYDY…DISS), 195–223 (NHWP…DVRA), and 225–253 (NYNP…EIGS). A disordered region spans residues 254-276 (VSDDDTYDSDSSDYSEDDSESIN). The segment covering 255-276 (SDDDTYDSDSSDYSEDDSESIN) has biased composition (acidic residues).

The chain is Putative ankyrin repeat protein R838 from Acanthamoeba polyphaga (Amoeba).